Consider the following 235-residue polypeptide: Probable transcriptional regulatory protein Cj1172c (235 aa).

The protein belongs to the TACO1 family.

The protein localises to the cytoplasm. The protein is Probable transcriptional regulatory protein Cj1172c of Campylobacter jejuni subsp. jejuni serotype O:2 (strain ATCC 700819 / NCTC 11168).